We begin with the raw amino-acid sequence, 228 residues long: Octanoyltransferase (228 aa).

Residues 31–212 (EETDGILILL…KFEEVFEIKF (182 aa)) form the BPL/LPL catalytic domain. Substrate is bound by residues 76–83 (RGGKITFH), 143–145 (AIG), and 156–158 (GIA). The active-site Acyl-thioester intermediate is the C174.

It belongs to the LipB family.

It is found in the cytoplasm. The catalysed reaction is octanoyl-[ACP] + L-lysyl-[protein] = N(6)-octanoyl-L-lysyl-[protein] + holo-[ACP] + H(+). The protein operates within protein modification; protein lipoylation via endogenous pathway; protein N(6)-(lipoyl)lysine from octanoyl-[acyl-carrier-protein]: step 1/2. Catalyzes the transfer of endogenously produced octanoic acid from octanoyl-acyl-carrier-protein onto the lipoyl domains of lipoate-dependent enzymes. Lipoyl-ACP can also act as a substrate although octanoyl-ACP is likely to be the physiological substrate. In Caldanaerobacter subterraneus subsp. tengcongensis (strain DSM 15242 / JCM 11007 / NBRC 100824 / MB4) (Thermoanaerobacter tengcongensis), this protein is Octanoyltransferase.